Reading from the N-terminus, the 80-residue chain is Cytochrome c oxidase subunit 7B, mitochondrial (80 aa).

A mitochondrion-targeting transit peptide spans 1-24 (MFPLVKSALNRLQVRSIQQTMARQ). The Mitochondrial matrix segment spans residues 25 to 32 (SHQKRTPD). The chain crosses the membrane as a helical span at residues 33–59 (FHDKYGNAVLASGATFCIVTWTYVATQ). The Mitochondrial intermembrane portion of the chain corresponds to 60–80 (VGIEWNLSPVGRVTPKEWRNQ).

Belongs to the cytochrome c oxidase VIIb family. Component of the cytochrome c oxidase (complex IV, CIV), a multisubunit enzyme composed of 14 subunits. The complex is composed of a catalytic core of 3 subunits MT-CO1, MT-CO2 and MT-CO3, encoded in the mitochondrial DNA, and 11 supernumerary subunits COX4I1 (or COX4I2), COX5A, COX5B, COX6A1 (or COX6A2), COX6B1 (or COX6B2), COX6C, COX7A2 (or COX7A1), COX7B, COX7C, COX8A and NDUFA4, which are encoded in the nuclear genome. The complex exists as a monomer or a dimer and forms supercomplexes (SCs) in the inner mitochondrial membrane with NADH-ubiquinone oxidoreductase (complex I, CI) and ubiquinol-cytochrome c oxidoreductase (cytochrome b-c1 complex, complex III, CIII), resulting in different assemblies (supercomplex SCI(1)III(2)IV(1) and megacomplex MCI(2)III(2)IV(2)).

It is found in the mitochondrion inner membrane. It functions in the pathway energy metabolism; oxidative phosphorylation. Functionally, component of the cytochrome c oxidase, the last enzyme in the mitochondrial electron transport chain which drives oxidative phosphorylation. The respiratory chain contains 3 multisubunit complexes succinate dehydrogenase (complex II, CII), ubiquinol-cytochrome c oxidoreductase (cytochrome b-c1 complex, complex III, CIII) and cytochrome c oxidase (complex IV, CIV), that cooperate to transfer electrons derived from NADH and succinate to molecular oxygen, creating an electrochemical gradient over the inner membrane that drives transmembrane transport and the ATP synthase. Cytochrome c oxidase is the component of the respiratory chain that catalyzes the reduction of oxygen to water. Electrons originating from reduced cytochrome c in the intermembrane space (IMS) are transferred via the dinuclear copper A center (CU(A)) of subunit 2 and heme A of subunit 1 to the active site in subunit 1, a binuclear center (BNC) formed by heme A3 and copper B (CU(B)). The BNC reduces molecular oxygen to 2 water molecules using 4 electrons from cytochrome c in the IMS and 4 protons from the mitochondrial matrix. Plays a role in proper central nervous system (CNS) development in vertebrates. This chain is Cytochrome c oxidase subunit 7B, mitochondrial (COX7B), found in Homo sapiens (Human).